A 445-amino-acid chain; its full sequence is Anthranilate N-benzoyltransferase protein 3 (445 aa).

Catalysis depends on proton acceptor residues His164 and Asp392.

The protein belongs to the plant acyltransferase family. Post-translationally, N-terminus is blocked.

The enzyme catalyses anthranilate + benzoyl-CoA = N-benzoylanthranilate + CoA. It functions in the pathway phytoalexin biosynthesis; methoxydianthramide B biosynthesis. Functionally, catalyzes the formation of N-benzoylanthranilate, in the course of methoxydianthramide B, a phytoalexin. Phytoalexins are produced in response to infection by parasites, and are essential for the expression of disease resistance. In Dianthus caryophyllus (Carnation), this protein is Anthranilate N-benzoyltransferase protein 3 (HCBT3).